A 367-amino-acid polypeptide reads, in one-letter code: Phosphoribosylaminoimidazole-succinocarboxamide synthase (367 aa).

This sequence belongs to the SAICAR synthetase family.

The catalysed reaction is 5-amino-1-(5-phospho-D-ribosyl)imidazole-4-carboxylate + L-aspartate + ATP = (2S)-2-[5-amino-1-(5-phospho-beta-D-ribosyl)imidazole-4-carboxamido]succinate + ADP + phosphate + 2 H(+). It participates in purine metabolism; IMP biosynthesis via de novo pathway; 5-amino-1-(5-phospho-D-ribosyl)imidazole-4-carboxamide from 5-amino-1-(5-phospho-D-ribosyl)imidazole-4-carboxylate: step 1/2. In Shewanella baltica (strain OS185), this protein is Phosphoribosylaminoimidazole-succinocarboxamide synthase.